Consider the following 497-residue polypeptide: Aldehyde dehydrogenase (497 aa).

241 to 246 (GSTVVG) contributes to the NAD(+) binding site. Glu-264 (proton acceptor) is an active-site residue. Cys-298 acts as the Nucleophile in catalysis.

Belongs to the aldehyde dehydrogenase family.

The protein resides in the cytoplasm. It catalyses the reaction an aldehyde + NAD(+) + H2O = a carboxylate + NADH + 2 H(+). It participates in alcohol metabolism; ethanol degradation; acetate from ethanol: step 2/2. The polypeptide is Aldehyde dehydrogenase (ALTA10) (Alternaria alternata (Alternaria rot fungus)).